The sequence spans 222 residues: Thymidylate kinase (222 aa).

Residue 7–14 (GIDGAGKS) participates in ATP binding.

This sequence belongs to the thymidylate kinase family.

It catalyses the reaction dTMP + ATP = dTDP + ADP. Functionally, phosphorylation of dTMP to form dTDP in both de novo and salvage pathways of dTTP synthesis. This Chlorobium chlorochromatii (strain CaD3) protein is Thymidylate kinase.